Consider the following 561-residue polypeptide: Sesquiterpene synthase 1 (561 aa).

4 residues coordinate Mg(2+): Asp313, Asp317, Asp458, and Glu466. A DDXXD motif motif is present at residues 313–317; it reads DDIYD.

Belongs to the terpene synthase family. Tpsa subfamily. Requires Mn(2+) as cofactor. Mg(2+) is required as a cofactor.

Its subcellular location is the cytoplasm. The enzyme catalyses (2E,6E)-farnesyl diphosphate = (1S,8aR)-delta-cadinene + diphosphate. It functions in the pathway secondary metabolite biosynthesis; terpenoid biosynthesis. Functionally, involved in the biosynthesis of delta-cadinene. This is Sesquiterpene synthase 1 (STS1) from Thapsia garganica (Deadly carrot).